We begin with the raw amino-acid sequence, 20 residues long: Phylloseptin-O1 (20 aa).

A Glycine amide modification is found at glycine 20.

Expressed by the skin glands.

The protein localises to the secreted. Functionally, has antiprotozoal activity against T.cruzi. This chain is Phylloseptin-O1 (psn4), found in Pithecopus oreades (Orange-legged leaf frog).